Here is a 164-residue protein sequence, read N- to C-terminus: ATP synthase subunit b 2 (164 aa).

Residues 4 to 24 (TFWAFVGLVLFLALLAYFKVP) form a helical membrane-spanning segment.

Belongs to the ATPase B chain family. As to quaternary structure, F-type ATPases have 2 components, F(1) - the catalytic core - and F(0) - the membrane proton channel. F(1) has five subunits: alpha(3), beta(3), gamma(1), delta(1), epsilon(1). F(0) has three main subunits: a(1), b(2) and c(10-14). The alpha and beta chains form an alternating ring which encloses part of the gamma chain. F(1) is attached to F(0) by a central stalk formed by the gamma and epsilon chains, while a peripheral stalk is formed by the delta and b chains.

It localises to the cell inner membrane. Functionally, f(1)F(0) ATP synthase produces ATP from ADP in the presence of a proton or sodium gradient. F-type ATPases consist of two structural domains, F(1) containing the extramembraneous catalytic core and F(0) containing the membrane proton channel, linked together by a central stalk and a peripheral stalk. During catalysis, ATP synthesis in the catalytic domain of F(1) is coupled via a rotary mechanism of the central stalk subunits to proton translocation. Component of the F(0) channel, it forms part of the peripheral stalk, linking F(1) to F(0). The protein is ATP synthase subunit b 2 of Bartonella quintana (strain Toulouse) (Rochalimaea quintana).